The chain runs to 95 residues: UPF0213 protein ESA_03545 (95 aa).

The GIY-YIG domain occupies 2 to 77 (EEWFLYLIRC…KQLTKRQKEQ (76 aa)).

The protein belongs to the UPF0213 family.

In Cronobacter sakazakii (strain ATCC BAA-894) (Enterobacter sakazakii), this protein is UPF0213 protein ESA_03545.